Reading from the N-terminus, the 314-residue chain is Aspartate carbamoyltransferase catalytic subunit (314 aa).

Residues Arg-55 and Thr-56 each contribute to the carbamoyl phosphate site. Lys-83 contributes to the L-aspartate binding site. Residues Arg-105, His-139, and Gln-142 each coordinate carbamoyl phosphate. Arg-172 and Arg-226 together coordinate L-aspartate. Gly-267 and Pro-268 together coordinate carbamoyl phosphate.

The protein belongs to the aspartate/ornithine carbamoyltransferase superfamily. ATCase family. As to quaternary structure, heterododecamer (2C3:3R2) of six catalytic PyrB chains organized as two trimers (C3), and six regulatory PyrI chains organized as three dimers (R2).

The catalysed reaction is carbamoyl phosphate + L-aspartate = N-carbamoyl-L-aspartate + phosphate + H(+). It functions in the pathway pyrimidine metabolism; UMP biosynthesis via de novo pathway; (S)-dihydroorotate from bicarbonate: step 2/3. In terms of biological role, catalyzes the condensation of carbamoyl phosphate and aspartate to form carbamoyl aspartate and inorganic phosphate, the committed step in the de novo pyrimidine nucleotide biosynthesis pathway. This chain is Aspartate carbamoyltransferase catalytic subunit, found in Rhodococcus erythropolis (strain PR4 / NBRC 100887).